A 268-amino-acid polypeptide reads, in one-letter code: 4-hydroxy-tetrahydrodipicolinate reductase (268 aa).

NAD(+) is bound by residues 7-12 (GAGGRM) and glutamate 33. Arginine 34 lines the NADP(+) pocket. NAD(+) contacts are provided by residues 97–99 (GTT) and 121–124 (SGNM). Catalysis depends on histidine 155, which acts as the Proton donor/acceptor. Histidine 156 is a (S)-2,3,4,5-tetrahydrodipicolinate binding site. Lysine 159 acts as the Proton donor in catalysis. (S)-2,3,4,5-tetrahydrodipicolinate is bound at residue 165–166 (GT).

This sequence belongs to the DapB family.

It is found in the cytoplasm. The catalysed reaction is (S)-2,3,4,5-tetrahydrodipicolinate + NAD(+) + H2O = (2S,4S)-4-hydroxy-2,3,4,5-tetrahydrodipicolinate + NADH + H(+). The enzyme catalyses (S)-2,3,4,5-tetrahydrodipicolinate + NADP(+) + H2O = (2S,4S)-4-hydroxy-2,3,4,5-tetrahydrodipicolinate + NADPH + H(+). Its pathway is amino-acid biosynthesis; L-lysine biosynthesis via DAP pathway; (S)-tetrahydrodipicolinate from L-aspartate: step 4/4. Its function is as follows. Catalyzes the conversion of 4-hydroxy-tetrahydrodipicolinate (HTPA) to tetrahydrodipicolinate. This chain is 4-hydroxy-tetrahydrodipicolinate reductase, found in Brucella abortus (strain 2308).